Reading from the N-terminus, the 346-residue chain is N-acetyl-gamma-glutamyl-phosphate reductase (346 aa).

C149 is an active-site residue.

It belongs to the NAGSA dehydrogenase family. Type 1 subfamily.

Its subcellular location is the cytoplasm. The catalysed reaction is N-acetyl-L-glutamate 5-semialdehyde + phosphate + NADP(+) = N-acetyl-L-glutamyl 5-phosphate + NADPH + H(+). The protein operates within amino-acid biosynthesis; L-arginine biosynthesis; N(2)-acetyl-L-ornithine from L-glutamate: step 3/4. In terms of biological role, catalyzes the NADPH-dependent reduction of N-acetyl-5-glutamyl phosphate to yield N-acetyl-L-glutamate 5-semialdehyde. The polypeptide is N-acetyl-gamma-glutamyl-phosphate reductase (Saccharophagus degradans (strain 2-40 / ATCC 43961 / DSM 17024)).